We begin with the raw amino-acid sequence, 444 residues long: Tubulin beta-7 chain (444 aa).

GTP is bound by residues glutamine 11, glutamate 69, serine 138, glycine 142, threonine 143, glycine 144, asparagine 204, and asparagine 226. Glutamate 69 lines the Mg(2+) pocket.

Belongs to the tubulin family. As to quaternary structure, dimer of alpha and beta chains. A typical microtubule is a hollow water-filled tube with an outer diameter of 25 nm and an inner diameter of 15 nM. Alpha-beta heterodimers associate head-to-tail to form protofilaments running lengthwise along the microtubule wall with the beta-tubulin subunit facing the microtubule plus end conferring a structural polarity. Microtubules usually have 13 protofilaments but different protofilament numbers can be found in some organisms and specialized cells. Mg(2+) serves as cofactor. Expressed in roots, leaf sheaths, and suspension cultured cells.

The protein resides in the cytoplasm. It is found in the cytoskeleton. Tubulin is the major constituent of microtubules, a cylinder consisting of laterally associated linear protofilaments composed of alpha- and beta-tubulin heterodimers. Microtubules grow by the addition of GTP-tubulin dimers to the microtubule end, where a stabilizing cap forms. Below the cap, tubulin dimers are in GDP-bound state, owing to GTPase activity of alpha-tubulin. In Oryza sativa subsp. japonica (Rice), this protein is Tubulin beta-7 chain (TUBB7).